Consider the following 527-residue polypeptide: Importin subunit alpha (527 aa).

The 58-residue stretch at Met1–Gln58 folds into the IBB domain. ARM repeat units lie at residues Ile109–Asn151, Thr152–Leu196, Val197–Pro234, Gln235–Gln279, Ala280–Gln319, Thr320–Gln362, Ile363–His403, and Asp404–Glu445.

Belongs to the importin alpha family. As to quaternary structure, forms a complex with importin subunit beta-1.

Its subcellular location is the cytoplasm. Functionally, binds specifically and directly to substrates containing either a simple or bipartite NLS motif. Promotes docking of import substrates to the nuclear envelope. Seems to act as a cytosolic receptor for both simple and bipartite NLS motifs. The chain is Importin subunit alpha from Solanum lycopersicum (Tomato).